Consider the following 456-residue polypeptide: Glycine receptor subunit alpha-4 (456 aa).

A signal peptide spans 1–27 (MTTLVPASLFLLLWTLPGKVLLSVALA). Over 28–256 (KEDVKSGLKG…KFHLERQMGY (229 aa)) the chain is Extracellular. An N-linked (GlcNAc...) asparagine glycan is attached at Asn-71. 2 disulfides stabilise this stretch: Cys-171–Cys-185 and Cys-232–Cys-243. 236–241 (YNTGKF) contributes to the strychnine binding site. The helical transmembrane segment at 257-278 (YLIQMYIPSLLIVILSWVSFWI) threads the bilayer. At 279-283 (NMDAA) the chain is on the cytoplasmic side. The helical transmembrane segment at 284 to 304 (PARVGLGITTVLTMTTQSSGS) threads the bilayer. The Extracellular portion of the chain corresponds to 305-315 (RASLPKVSYVK). Residues 316 to 336 (AIDIWMAVCLLFVFAALLEYA) form a helical membrane-spanning segment. At 337–423 (AVNFVSRQHK…YVDRAKRIDT (87 aa)) the chain is on the cytoplasmic side. A helical membrane pass occupies residues 424 to 444 (ISRAVFPFTFLVFNIFYWVVY). Residues 445-456 (KVLRSEDIHQAL) lie on the Extracellular side of the membrane.

The protein belongs to the ligand-gated ion channel (TC 1.A.9) family. Glycine receptor (TC 1.A.9.3) subfamily. GLRA4 sub-subfamily. In terms of assembly, homopentamer (in vitro). Heteropentamer composed of GLRA4 and GLRB. Detected in the retina inner plexiform layer, especially at the border between layer three and four (at protein level).

Its subcellular location is the postsynaptic cell membrane. It localises to the synapse. The protein localises to the perikaryon. The protein resides in the cell projection. It is found in the dendrite. Its subcellular location is the cell membrane. It catalyses the reaction chloride(in) = chloride(out). With respect to regulation, inhibited by strychnine. In terms of biological role, glycine receptors are ligand-gated chloride channels. Channel opening is triggered by extracellular glycine. Channel opening is also triggered by taurine and beta-alanine. Plays a role in the down-regulation of neuronal excitability. Contributes to the generation of inhibitory postsynaptic currents. The polypeptide is Glycine receptor subunit alpha-4 (Glra4) (Mus musculus (Mouse)).